The following is a 151-amino-acid chain: UPF0251 protein Ctha_0452 (151 aa).

This sequence belongs to the UPF0251 family.

This is UPF0251 protein Ctha_0452 from Chloroherpeton thalassium (strain ATCC 35110 / GB-78).